The primary structure comprises 95 residues: Putative pterin-4-alpha-carbinolamine dehydratase (95 aa).

The protein belongs to the pterin-4-alpha-carbinolamine dehydratase family.

The enzyme catalyses (4aS,6R)-4a-hydroxy-L-erythro-5,6,7,8-tetrahydrobiopterin = (6R)-L-erythro-6,7-dihydrobiopterin + H2O. This Prochlorococcus marinus (strain NATL2A) protein is Putative pterin-4-alpha-carbinolamine dehydratase.